The primary structure comprises 174 residues: Crossover junction endodeoxyribonuclease RuvC (174 aa).

Active-site residues include Asp8, Glu67, and Asp139. The Mg(2+) site is built by Asp8, Glu67, and Asp139.

Belongs to the RuvC family. As to quaternary structure, homodimer which binds Holliday junction (HJ) DNA. The HJ becomes 2-fold symmetrical on binding to RuvC with unstacked arms; it has a different conformation from HJ DNA in complex with RuvA. In the full resolvosome a probable DNA-RuvA(4)-RuvB(12)-RuvC(2) complex forms which resolves the HJ. It depends on Mg(2+) as a cofactor.

The protein localises to the cytoplasm. It carries out the reaction Endonucleolytic cleavage at a junction such as a reciprocal single-stranded crossover between two homologous DNA duplexes (Holliday junction).. Its function is as follows. The RuvA-RuvB-RuvC complex processes Holliday junction (HJ) DNA during genetic recombination and DNA repair. Endonuclease that resolves HJ intermediates. Cleaves cruciform DNA by making single-stranded nicks across the HJ at symmetrical positions within the homologous arms, yielding a 5'-phosphate and a 3'-hydroxyl group; requires a central core of homology in the junction. The consensus cleavage sequence is 5'-(A/T)TT(C/G)-3'. Cleavage occurs on the 3'-side of the TT dinucleotide at the point of strand exchange. HJ branch migration catalyzed by RuvA-RuvB allows RuvC to scan DNA until it finds its consensus sequence, where it cleaves and resolves the cruciform DNA. This chain is Crossover junction endodeoxyribonuclease RuvC, found in Pseudomonas putida (strain ATCC 47054 / DSM 6125 / CFBP 8728 / NCIMB 11950 / KT2440).